Consider the following 725-residue polypeptide: N-alpha-acetyltransferase 35, NatC auxiliary subunit (725 aa).

The residue at position 187 (Ser187) is a Phosphoserine. The interval Glu548–Ser573 is disordered. Positions Arg558–Pro571 are enriched in basic residues.

It belongs to the MAK10 family. In terms of assembly, component of the N-terminal acetyltransferase C (NatC) complex, which is composed of NAA35, NAA38 and NAA30.

The protein localises to the cytoplasm. Auxillary component of the N-terminal acetyltransferase C (NatC) complex which catalyzes acetylation of N-terminal methionine residues. N-terminal acetylation protects proteins from ubiquitination and degradation by the N-end rule pathway. Involved in regulation of apoptosis and proliferation of smooth muscle cells. This is N-alpha-acetyltransferase 35, NatC auxiliary subunit (NAA35) from Homo sapiens (Human).